Reading from the N-terminus, the 230-residue chain is Leucyl/phenylalanyl-tRNA--protein transferase (230 aa).

It belongs to the L/F-transferase family.

The protein resides in the cytoplasm. The catalysed reaction is N-terminal L-lysyl-[protein] + L-leucyl-tRNA(Leu) = N-terminal L-leucyl-L-lysyl-[protein] + tRNA(Leu) + H(+). It catalyses the reaction N-terminal L-arginyl-[protein] + L-leucyl-tRNA(Leu) = N-terminal L-leucyl-L-arginyl-[protein] + tRNA(Leu) + H(+). It carries out the reaction L-phenylalanyl-tRNA(Phe) + an N-terminal L-alpha-aminoacyl-[protein] = an N-terminal L-phenylalanyl-L-alpha-aminoacyl-[protein] + tRNA(Phe). Functions in the N-end rule pathway of protein degradation where it conjugates Leu, Phe and, less efficiently, Met from aminoacyl-tRNAs to the N-termini of proteins containing an N-terminal arginine or lysine. The polypeptide is Leucyl/phenylalanyl-tRNA--protein transferase (Rhodopseudomonas palustris (strain BisB18)).